A 325-amino-acid chain; its full sequence is ATP phosphoribosyltransferase (325 aa).

The protein belongs to the ATP phosphoribosyltransferase family. Long subfamily. Mg(2+) serves as cofactor.

The protein resides in the cytoplasm. It catalyses the reaction 1-(5-phospho-beta-D-ribosyl)-ATP + diphosphate = 5-phospho-alpha-D-ribose 1-diphosphate + ATP. It functions in the pathway amino-acid biosynthesis; L-histidine biosynthesis; L-histidine from 5-phospho-alpha-D-ribose 1-diphosphate: step 1/9. With respect to regulation, feedback inhibited by histidine. Functionally, catalyzes the condensation of ATP and 5-phosphoribose 1-diphosphate to form N'-(5'-phosphoribosyl)-ATP (PR-ATP). Has a crucial role in the pathway because the rate of histidine biosynthesis seems to be controlled primarily by regulation of HisG enzymatic activity. This chain is ATP phosphoribosyltransferase, found in Rhodopseudomonas palustris (strain HaA2).